Reading from the N-terminus, the 258-residue chain is Regulatory protein RecX (258 aa).

This sequence belongs to the RecX family.

The protein resides in the cytoplasm. Functionally, modulates RecA activity. This Streptococcus pneumoniae (strain JJA) protein is Regulatory protein RecX.